A 255-amino-acid polypeptide reads, in one-letter code: Small ribosomal subunit protein uS2 (255 aa).

The segment at 226–255 (QGVSNEEVAAEQNIDLDEKEKSEETEATEE) is disordered.

It belongs to the universal ribosomal protein uS2 family.

The chain is Small ribosomal subunit protein uS2 from Staphylococcus aureus (strain Mu3 / ATCC 700698).